A 511-amino-acid polypeptide reads, in one-letter code: Glutamate/gamma-aminobutyrate antiporter (511 aa).

Topologically, residues 1 to 14 (MATLVQTGKAKQLT) are cytoplasmic. A helical transmembrane segment spans residues 15–35 (LLGFFAITASMVMAVYEYPTF). At 36-41 (ATSGFS) the chain is on the periplasmic side. The chain crosses the membrane as a helical span at residues 42–62 (LVFFLLLGGILWFIPVGLCAA). At 63–93 (EMATVDGWEEGGVFAWVSNTLGPRWGFAAIS) the chain is on the cytoplasmic side. The helical transmembrane segment at 94–114 (FGYLQIAIGFIPMLYFVLGAL) threads the bilayer. The Periplasmic portion of the chain corresponds to 115–127 (SYILKWPALNEDP). The helical transmembrane segment at 128–148 (ITKTIAALIILWALALTQFGG) threads the bilayer. At 149-157 (TKYTARIAK) the chain is on the cytoplasmic side. Residues 158–178 (VGFFAGILLPAFILIALAAIY) form a helical membrane-spanning segment. The Periplasmic segment spans residues 179 to 200 (LHSGAPVAIEMDSKTFFPDFSK). Residues 201–221 (VGTLVVFVAFILSYMGVEASA) form a helical membrane-spanning segment. Residues 222–239 (THVNEMSNPGRDYPLAML) lie on the Cytoplasmic side of the membrane. Residues 240 to 260 (LLMVAAICLSSVGGLSIAMVI) traverse the membrane as a helical segment. Topologically, residues 261–291 (PGNEINLSAGVMQTFTVLMSHVAPEIEWTVR) are periplasmic. The helical transmembrane segment at 292–312 (VISALLLLGVLAEIASWIVGP) threads the bilayer. At 313 to 335 (SRGMYVTAQKNLLPAAFAKMNKN) the chain is on the cytoplasmic side. Residues 336–356 (GVPVTLVISQLVITSIALIIL) traverse the membrane as a helical segment. Topologically, residues 357–366 (TNTGGGNNMS) are periplasmic. Residues 367-387 (FLIALALTVVIYLCAYFMLFI) form a helical membrane-spanning segment. Topologically, residues 388–412 (GYIVLVLKHPDLKRTFNIPGGKGVK) are cytoplasmic. A helical transmembrane segment spans residues 413-433 (LVVAIVGLLTSIMAFIVSFLP). Topologically, residues 434–445 (PDNIQGDSTDMY) are periplasmic. A helical transmembrane segment spans residues 446-466 (VELLVVSFLVVLALPFILYAV). At 467 to 511 (HDRKGKANTGVTLEPINSQNAPKGHFFLHPRARSPHYIVMNDKKH) the chain is on the cytoplasmic side.

This sequence belongs to the amino acid-polyamine-organocation (APC) superfamily. Glutamate:GABA antiporter (GGA) (TC 2.A.3.7) family.

Its subcellular location is the cell inner membrane. It carries out the reaction 4-aminobutanoate(in) + L-glutamate(out) = 4-aminobutanoate(out) + L-glutamate(in). Shows pH-dependent activity. The glutamate analog L-trans-pyrrolidine-2,4-dicarboxylic acid (L-PDC) blocks the uptake of glutamate by selective inhibition. In terms of biological role, involved in glutaminase-dependent acid resistance. Exchanges extracellular glutamate (Glu) for intracellular gamma-aminobutyric acid (GABA) under acidic conditions. The ability to survive the extremely acidic conditions of the stomach is essential for successful colonization of the host by commensal and pathogenic bacteria. The protein is Glutamate/gamma-aminobutyrate antiporter (gadC) of Escherichia coli O157:H7.